The sequence spans 154 residues: Plastocyanin, chloroplastic (154 aa).

A chloroplast-targeting transit peptide spans 1–57 (MAALSSAAVTIPSMAPSAPGRRRMRSSLVVRASLGKAAGAAAVAVAASAMLAGGAMA). The 97-residue stretch at 58–154 (QEVLLGANGG…AGMVGKVTVN (97 aa)) folds into the Plastocyanin-like domain. 4 residues coordinate Cu cation: H94, C139, H142, and M147.

This sequence belongs to the plastocyanin family. Requires Cu(2+) as cofactor.

It is found in the plastid. The protein localises to the chloroplast thylakoid membrane. In terms of biological role, participates in electron transfer between P700 and the cytochrome b6-f complex in photosystem I. This chain is Plastocyanin, chloroplastic (PETE), found in Oryza sativa subsp. indica (Rice).